Reading from the N-terminus, the 357-residue chain is Membrane-bound lytic murein transglycosylase C (357 aa).

The first 15 residues, 1–15 (MKKYLLLALLPFLYA), serve as a signal peptide directing secretion. A lipid anchor (N-palmitoyl cysteine) is attached at Cys16. The S-diacylglycerol cysteine moiety is linked to residue Cys16.

Belongs to the transglycosylase Slt family.

The protein resides in the cell outer membrane. It carries out the reaction Exolytic cleavage of the (1-&gt;4)-beta-glycosidic linkage between N-acetylmuramic acid (MurNAc) and N-acetylglucosamine (GlcNAc) residues in peptidoglycan, from either the reducing or the non-reducing ends of the peptidoglycan chains, with concomitant formation of a 1,6-anhydrobond in the MurNAc residue.. Functionally, murein-degrading enzyme. May play a role in recycling of muropeptides during cell elongation and/or cell division. The sequence is that of Membrane-bound lytic murein transglycosylase C from Haemophilus influenzae (strain PittEE).